The chain runs to 731 residues: MASSASSSSSPSSRPPLMALPSFYRPPWPSERGGEQRATDCWAGSPAAGGGRARATAMGIDLNNTASGGEEDAPAPGPVCRDLWHACAGPVVSLPRRGSAVVYLPQGHLSAAGAGGGIRGEVAVALPPHVACRVVDVELCADAATDEVYARLALRAEGEVFERNLHGGGIEREDDMEDGDEERKSRMLHMFCKTLTASDTSTHGGFSVPRRAAEDCFPPLDHKQLRPSQELVAKDLHGAKWRFRHIYRGQPRRHLLTTGWSSFVNKKKLVSGDAVLFLRGDDGELRLGVRRATQLKNEAIFKAFSSESSKMRTLSAVADSLKHGSVFHICYNPRATASEYVVPYWKFVKSFNHPVCIGMRFKFHFESEDVNERRSGMIAGVSEVDPIRWPGSKWRSLLVRWEDATDCNSQNRVSPWEIEIVGGSISVAHSLSASSSKRTKLCPQGNLDVPALYGNGRPDSVETEKFPRVLQGQELMGSRTHRATCSPQSIDITKSKSFDAWRFLTDTRSCMLGSSTSRLPVQYSGYTHQSVSFGESIGFPEVLQGQEISQTVPPFQGMLPDACSAKSRYELKNYVCTPATMNGLSSANEGYCLSLSTVPPSPPSSLMLYQTGVPQLELASKNNDKSGNDSQPALRQHKLLSETSWDQFKIGKASTPGNATKPGNGGREVDRTSCRLFGFSLTEKIIPTDKDGEKEVSYETDCQNPRMLDLFGYNCSTPGALHALCAAPLGI.

A compositionally biased stretch (low complexity) spans 1-22; the sequence is MASSASSSSSPSSRPPLMALPS. The segment at 1-41 is disordered; sequence MASSASSSSSPSSRPPLMALPSFYRPPWPSERGGEQRATDC. The TF-B3 DNA-binding region spans 191–293; the sequence is FCKTLTASDT…ELRLGVRRAT (103 aa).

The protein belongs to the ARF family. As to quaternary structure, homo and heterodimers. Expressed in roots, culms, leaves and young panicles.

The protein resides in the nucleus. Its function is as follows. Auxin response factors (ARFs) are transcriptional factors that bind specifically to the DNA sequence 5'-TGTCTC-3' found in the auxin-responsive promoter elements (AuxREs). The sequence is that of Auxin response factor 3 (ARF3) from Oryza sativa subsp. japonica (Rice).